Consider the following 285-residue polypeptide: NAD kinase (285 aa).

Asp-76 functions as the Proton acceptor in the catalytic mechanism. Residues Asp-76–Gly-77, Asn-151–Glu-152, His-162, Arg-179, Asp-181, Thr-192–Ser-197, and Gln-252 contribute to the NAD(+) site.

Belongs to the NAD kinase family. A divalent metal cation is required as a cofactor.

The protein localises to the cytoplasm. It catalyses the reaction NAD(+) + ATP = ADP + NADP(+) + H(+). Functionally, involved in the regulation of the intracellular balance of NAD and NADP, and is a key enzyme in the biosynthesis of NADP. Catalyzes specifically the phosphorylation on 2'-hydroxyl of the adenosine moiety of NAD to yield NADP. In Haemophilus influenzae (strain ATCC 51907 / DSM 11121 / KW20 / Rd), this protein is NAD kinase.